The sequence spans 399 residues: S-adenosylmethionine synthase (399 aa).

His-16 lines the ATP pocket. Residue Asp-18 participates in Mg(2+) binding. Glu-44 contributes to the K(+) binding site. Residues Glu-57 and Gln-100 each contribute to the L-methionine site. A flexible loop region spans residues 100 to 110; the sequence is QSPDIAQGVDD. ATP contacts are provided by residues 174–176, 241–242, Asp-250, 256–257, Ala-273, and Lys-277; these read DAK, RF, and RK. Position 250 (Asp-250) interacts with L-methionine. An L-methionine-binding site is contributed by Lys-281.

The protein belongs to the AdoMet synthase family. In terms of assembly, homotetramer; dimer of dimers. It depends on Mg(2+) as a cofactor. K(+) serves as cofactor.

It localises to the cytoplasm. The enzyme catalyses L-methionine + ATP + H2O = S-adenosyl-L-methionine + phosphate + diphosphate. The protein operates within amino-acid biosynthesis; S-adenosyl-L-methionine biosynthesis; S-adenosyl-L-methionine from L-methionine: step 1/1. In terms of biological role, catalyzes the formation of S-adenosylmethionine (AdoMet) from methionine and ATP. The overall synthetic reaction is composed of two sequential steps, AdoMet formation and the subsequent tripolyphosphate hydrolysis which occurs prior to release of AdoMet from the enzyme. In Latilactobacillus sakei subsp. sakei (strain 23K) (Lactobacillus sakei subsp. sakei), this protein is S-adenosylmethionine synthase.